The sequence spans 176 residues: Ribosome maturation factor RimM (176 aa).

One can recognise a PRC barrel domain in the interval 95-169; that stretch reads EDEVYLFELE…TARIAPPPGL (75 aa).

The protein belongs to the RimM family. Binds ribosomal protein uS19.

It localises to the cytoplasm. Functionally, an accessory protein needed during the final step in the assembly of 30S ribosomal subunit, possibly for assembly of the head region. Essential for efficient processing of 16S rRNA. May be needed both before and after RbfA during the maturation of 16S rRNA. It has affinity for free ribosomal 30S subunits but not for 70S ribosomes. This is Ribosome maturation factor RimM from Nitratidesulfovibrio vulgaris (strain ATCC 29579 / DSM 644 / CCUG 34227 / NCIMB 8303 / VKM B-1760 / Hildenborough) (Desulfovibrio vulgaris).